The primary structure comprises 275 residues: 3-methyl-2-oxobutanoate hydroxymethyltransferase (275 aa).

Positions 49 and 88 each coordinate Mg(2+). Residues 49–50, aspartate 88, and lysine 118 contribute to the 3-methyl-2-oxobutanoate site; that span reads DS. Glutamate 120 provides a ligand contact to Mg(2+). Glutamate 187 (proton acceptor) is an active-site residue.

This sequence belongs to the PanB family. In terms of assembly, homodecamer; pentamer of dimers. It depends on Mg(2+) as a cofactor.

It is found in the cytoplasm. The enzyme catalyses 3-methyl-2-oxobutanoate + (6R)-5,10-methylene-5,6,7,8-tetrahydrofolate + H2O = 2-dehydropantoate + (6S)-5,6,7,8-tetrahydrofolate. Its pathway is cofactor biosynthesis; (R)-pantothenate biosynthesis; (R)-pantoate from 3-methyl-2-oxobutanoate: step 1/2. Its function is as follows. Catalyzes the reversible reaction in which hydroxymethyl group from 5,10-methylenetetrahydrofolate is transferred onto alpha-ketoisovalerate to form ketopantoate. This Hyphomonas neptunium (strain ATCC 15444) protein is 3-methyl-2-oxobutanoate hydroxymethyltransferase.